The following is a 339-amino-acid chain: Dihydroorotate dehydrogenase (quinone) (339 aa).

Residues 64 to 68 (AGADK) and Thr-88 each bind FMN. Lys-68 serves as a coordination point for substrate. 113 to 117 (NRNGF) contacts substrate. 2 residues coordinate FMN: Asn-141 and Asn-174. Residue Asn-174 coordinates substrate. Ser-177 functions as the Nucleophile in the catalytic mechanism. Residue Asn-179 participates in substrate binding. FMN is bound by residues Lys-219 and Thr-247. A substrate-binding site is contributed by 248 to 249 (NT). FMN-binding positions include Gly-270, Gly-299, and 320–321 (YS).

It belongs to the dihydroorotate dehydrogenase family. Type 2 subfamily. Monomer. FMN serves as cofactor.

It is found in the cell membrane. The catalysed reaction is (S)-dihydroorotate + a quinone = orotate + a quinol. It functions in the pathway pyrimidine metabolism; UMP biosynthesis via de novo pathway; orotate from (S)-dihydroorotate (quinone route): step 1/1. Its function is as follows. Catalyzes the conversion of dihydroorotate to orotate with quinone as electron acceptor. The protein is Dihydroorotate dehydrogenase (quinone) of Haemophilus influenzae (strain 86-028NP).